The primary structure comprises 108 residues: UPF0145 protein sll118 (108 aa).

It belongs to the UPF0145 family.

The protein is UPF0145 protein sll118 of Synechocystis sp. (strain ATCC 27184 / PCC 6803 / Kazusa).